The chain runs to 504 residues: Maturase K (504 aa).

The protein belongs to the intron maturase 2 family. MatK subfamily.

Its subcellular location is the plastid. The protein resides in the chloroplast. Usually encoded in the trnK tRNA gene intron. Probably assists in splicing its own and other chloroplast group II introns. In Lupinus argenteus (Silvery lupine), this protein is Maturase K.